A 1177-amino-acid chain; its full sequence is DNA-directed RNA polymerase subunit beta' (1177 aa).

Cysteine 60, cysteine 62, cysteine 75, and cysteine 78 together coordinate Zn(2+). Mg(2+)-binding residues include aspartate 450, aspartate 452, and aspartate 454. Residues cysteine 795, cysteine 869, cysteine 876, and cysteine 879 each contribute to the Zn(2+) site.

It belongs to the RNA polymerase beta' chain family. In terms of assembly, the RNAP catalytic core consists of 2 alpha, 1 beta, 1 beta' and 1 omega subunit. When a sigma factor is associated with the core the holoenzyme is formed, which can initiate transcription. Mg(2+) serves as cofactor. The cofactor is Zn(2+).

It catalyses the reaction RNA(n) + a ribonucleoside 5'-triphosphate = RNA(n+1) + diphosphate. In terms of biological role, DNA-dependent RNA polymerase catalyzes the transcription of DNA into RNA using the four ribonucleoside triphosphates as substrates. In Clostridium botulinum (strain Alaska E43 / Type E3), this protein is DNA-directed RNA polymerase subunit beta'.